Consider the following 136-residue polypeptide: MTYLRIALASNKRKGSFVLRNSMAALSLSTSGFKFLLAYSSARAIFKLFANCKWAGCFFDLSKEMRKDMLVVNFRFFFKFYSSTKMHIRKQIIINIRHRRKFVIVFFFFSFSLSISCVQKFFLPPKSFVPRDIEKK.

The chain crosses the membrane as a helical span at residues 102–118 (FVIVFFFFSFSLSISCV).

The protein resides in the membrane. This is an uncharacterized protein from Saccharomyces cerevisiae (strain ATCC 204508 / S288c) (Baker's yeast).